The chain runs to 78 residues: uncharacterized protein (78 aa).

A helical membrane pass occupies residues 13 to 33; that stretch reads STILILLMSVLILLLSIDILA.

Its subcellular location is the membrane. This is an uncharacterized protein from Methanocaldococcus jannaschii (strain ATCC 43067 / DSM 2661 / JAL-1 / JCM 10045 / NBRC 100440) (Methanococcus jannaschii).